A 659-amino-acid chain; its full sequence is Exoribonuclease 2 (659 aa).

Positions 189–532 (RRDLTALHFV…NHRLIKACLA (344 aa)) constitute an RNB domain. The S1 motif domain maps to 577–659 (NPEFRAEVQD…ETRSLIGNLV (83 aa)).

It belongs to the RNR ribonuclease family. RNase II subfamily.

The protein resides in the cytoplasm. It carries out the reaction Exonucleolytic cleavage in the 3'- to 5'-direction to yield nucleoside 5'-phosphates.. In terms of biological role, involved in mRNA degradation. Hydrolyzes single-stranded polyribonucleotides processively in the 3' to 5' direction. This Mannheimia succiniciproducens (strain KCTC 0769BP / MBEL55E) protein is Exoribonuclease 2.